The following is a 252-amino-acid chain: 2-succinyl-6-hydroxy-2,4-cyclohexadiene-1-carboxylate synthase (252 aa).

The protein belongs to the AB hydrolase superfamily. MenH family. As to quaternary structure, monomer.

The enzyme catalyses 5-enolpyruvoyl-6-hydroxy-2-succinyl-cyclohex-3-ene-1-carboxylate = (1R,6R)-6-hydroxy-2-succinyl-cyclohexa-2,4-diene-1-carboxylate + pyruvate. The protein operates within quinol/quinone metabolism; 1,4-dihydroxy-2-naphthoate biosynthesis; 1,4-dihydroxy-2-naphthoate from chorismate: step 3/7. It participates in quinol/quinone metabolism; menaquinone biosynthesis. Functionally, catalyzes a proton abstraction reaction that results in 2,5-elimination of pyruvate from 2-succinyl-5-enolpyruvyl-6-hydroxy-3-cyclohexene-1-carboxylate (SEPHCHC) and the formation of 2-succinyl-6-hydroxy-2,4-cyclohexadiene-1-carboxylate (SHCHC). In Salmonella agona (strain SL483), this protein is 2-succinyl-6-hydroxy-2,4-cyclohexadiene-1-carboxylate synthase.